A 122-amino-acid polypeptide reads, in one-letter code: Small ribosomal subunit protein bS6 (122 aa).

A disordered region spans residues 96-122; it reads ETAPSPMMKAVQKEDAAKSHRTEAPAA. A compositionally biased stretch (basic and acidic residues) spans 106–122; the sequence is VQKEDAAKSHRTEAPAA.

This sequence belongs to the bacterial ribosomal protein bS6 family.

In terms of biological role, binds together with bS18 to 16S ribosomal RNA. The polypeptide is Small ribosomal subunit protein bS6 (Herminiimonas arsenicoxydans).